Here is a 463-residue protein sequence, read N- to C-terminus: MTLKIHDTLTREKRDFVPADPQRVTMYVCGPTVYNYAHIGNFRPVVVFDVLFRVLRHLYGEDAVVYARNVTDVDDKINQKAADEGVPISVITDRYLAAYHQDADALGALRPTLEPKATEHIGAILEMIGQLVENGSAYAAEGHVLFDTQSFADYGQLSGRPLDEMIAGARVEVAPYKRHPADFVLWKPSKENEPEWESPWGAGRPGWHIECSAMIDKALGQTIDIHAGGIDLTFPHHENEVAQSRCAHKTSVLANYWMHNGFLDMSGEKMSKSLGNVIIPHELLETTPGEVIRWALLSAHYRQPLDWTPELLEQSKKSLDRLYGALRRAKDVAPDQAMEAPAEVMSALMDDLNTPLATSAFFEVSSAIEKAVTAGDTVAIAANKARLLEAGALLGFLQADPDAWFEGDASDELKAQVEDLLAKRVAARAAKDWSAADAIRGELDALGVVVMDGPAGATWRMKD.

Residue Cys29 participates in Zn(2+) binding. The short motif at 31–41 (PTVYNYAHIGN) is the 'HIGH' region element. Residues Cys211, His236, and Glu240 each coordinate Zn(2+). The 'KMSKS' region motif lies at 269–273 (KMSKS). Residue Lys272 coordinates ATP.

This sequence belongs to the class-I aminoacyl-tRNA synthetase family. As to quaternary structure, monomer. The cofactor is Zn(2+).

The protein resides in the cytoplasm. It carries out the reaction tRNA(Cys) + L-cysteine + ATP = L-cysteinyl-tRNA(Cys) + AMP + diphosphate. The polypeptide is Cysteine--tRNA ligase (Caulobacter vibrioides (strain ATCC 19089 / CIP 103742 / CB 15) (Caulobacter crescentus)).